The chain runs to 458 residues: Ig mu chain C region secreted form (458 aa).

A CH1 region spans residues 1 to 106 (VSLSSPTLYP…SNRDLRVSFP (106 aa)). The cysteines at positions 28 and 90 are disulfide-linked. N-linked (GlcNAc...) asparagine glycosylation is found at asparagine 46 and asparagine 114. The segment at 107 to 222 (VDSELPPNVS…VSMSSECSTT (116 aa)) is CH2. Residues cysteine 137 and cysteine 200 are joined by a disulfide bond. Residues asparagine 212, asparagine 261, asparagine 277, and asparagine 284 are each glycosylated (N-linked (GlcNAc...) asparagine). The segment at 223–327 (PSPGIQVFPI…PLKHTISKSR (105 aa)) is CH3. Intrachain disulfides connect cysteine 249-cysteine 308 and cysteine 356-cysteine 418. The CH4 stretch occupies residues 328-458 (EVAKHPPAVY…IMSDTASTCY (131 aa)). Asparagine 445 is a glycosylation site (N-linked (GlcNAc...) asparagine).

The protein localises to the secreted. This Oryctolagus cuniculus (Rabbit) protein is Ig mu chain C region secreted form.